A 367-amino-acid chain; its full sequence is Riboflavin biosynthesis protein RibD (367 aa).

Residues 1-123 (MQDEYYMARA…RLQQAGIDVS (123 aa)) form the CMP/dCMP-type deaminase domain. Positions 1–145 (MQDEYYMARA…KGFLKRMRTG (145 aa)) are deaminase. Position 50 (His-50) interacts with Zn(2+). Glu-52 serves as the catalytic Proton donor. 2 residues coordinate Zn(2+): Cys-75 and Cys-84. The tract at residues 146-367 (FPYIQLKLGA…PDVCLHLVGA (222 aa)) is reductase. Residue 161 to 164 (TAMA) participates in NADP(+) binding. Ser-168 provides a ligand contact to substrate. Residue Trp-170 coordinates NADP(+). Arg-184 serves as a coordination point for substrate. NADP(+) contacts are provided by Thr-196 and Asp-200. Substrate is bound by residues Leu-204 and Arg-207. Ser-234 lines the NADP(+) pocket. Residue Glu-299 participates in substrate binding. 301–304 (GPTL) lines the NADP(+) pocket.

It in the N-terminal section; belongs to the cytidine and deoxycytidylate deaminase family. The protein in the C-terminal section; belongs to the HTP reductase family. In terms of assembly, homodimer. It depends on Zn(2+) as a cofactor.

The enzyme catalyses 2,5-diamino-6-hydroxy-4-(5-phosphoribosylamino)-pyrimidine + H2O + H(+) = 5-amino-6-(5-phospho-D-ribosylamino)uracil + NH4(+). The catalysed reaction is 5-amino-6-(5-phospho-D-ribitylamino)uracil + NADP(+) = 5-amino-6-(5-phospho-D-ribosylamino)uracil + NADPH + H(+). Its pathway is cofactor biosynthesis; riboflavin biosynthesis; 5-amino-6-(D-ribitylamino)uracil from GTP: step 2/4. It participates in cofactor biosynthesis; riboflavin biosynthesis; 5-amino-6-(D-ribitylamino)uracil from GTP: step 3/4. In terms of biological role, converts 2,5-diamino-6-(ribosylamino)-4(3h)-pyrimidinone 5'-phosphate into 5-amino-6-(ribosylamino)-2,4(1h,3h)-pyrimidinedione 5'-phosphate. The sequence is that of Riboflavin biosynthesis protein RibD (ribD) from Escherichia coli (strain K12).